The sequence spans 541 residues: Chaperonin GroEL (541 aa).

Residues 29-32 (TLGP), 86-90 (DGTTT), G413, 476-478 (NAA), and D492 contribute to the ATP site.

The protein belongs to the chaperonin (HSP60) family. As to quaternary structure, forms a cylinder of 14 subunits composed of two heptameric rings stacked back-to-back. Interacts with the co-chaperonin GroES.

Its subcellular location is the cytoplasm. The catalysed reaction is ATP + H2O + a folded polypeptide = ADP + phosphate + an unfolded polypeptide.. Functionally, together with its co-chaperonin GroES, plays an essential role in assisting protein folding. The GroEL-GroES system forms a nano-cage that allows encapsulation of the non-native substrate proteins and provides a physical environment optimized to promote and accelerate protein folding. This chain is Chaperonin GroEL, found in Streptococcus equi subsp. zooepidemicus (strain H70).